The chain runs to 232 residues: Biosynthetic peptidoglycan transglycosylase (232 aa).

A helical transmembrane segment spans residues 12–31; it reads YLLWFMAASVVLVAVLRWVP.

It belongs to the glycosyltransferase 51 family.

It localises to the cell inner membrane. The catalysed reaction is [GlcNAc-(1-&gt;4)-Mur2Ac(oyl-L-Ala-gamma-D-Glu-L-Lys-D-Ala-D-Ala)](n)-di-trans,octa-cis-undecaprenyl diphosphate + beta-D-GlcNAc-(1-&gt;4)-Mur2Ac(oyl-L-Ala-gamma-D-Glu-L-Lys-D-Ala-D-Ala)-di-trans,octa-cis-undecaprenyl diphosphate = [GlcNAc-(1-&gt;4)-Mur2Ac(oyl-L-Ala-gamma-D-Glu-L-Lys-D-Ala-D-Ala)](n+1)-di-trans,octa-cis-undecaprenyl diphosphate + di-trans,octa-cis-undecaprenyl diphosphate + H(+). The protein operates within cell wall biogenesis; peptidoglycan biosynthesis. Peptidoglycan polymerase that catalyzes glycan chain elongation from lipid-linked precursors. The chain is Biosynthetic peptidoglycan transglycosylase from Pseudomonas aeruginosa (strain ATCC 15692 / DSM 22644 / CIP 104116 / JCM 14847 / LMG 12228 / 1C / PRS 101 / PAO1).